We begin with the raw amino-acid sequence, 133 residues long: Small ribosomal subunit protein bS16 (133 aa).

Residues 83–101 show a composition bias toward basic and acidic residues; that stretch reads KRDARSNPKKAEPGKKAQE. The interval 83 to 102 is disordered; sequence KRDARSNPKKAEPGKKAQER.

It belongs to the bacterial ribosomal protein bS16 family.

This Mesorhizobium japonicum (strain LMG 29417 / CECT 9101 / MAFF 303099) (Mesorhizobium loti (strain MAFF 303099)) protein is Small ribosomal subunit protein bS16.